We begin with the raw amino-acid sequence, 332 residues long: Phosphate acyltransferase (332 aa).

It belongs to the PlsX family. In terms of assembly, homodimer. Probably interacts with PlsY.

It is found in the cytoplasm. The catalysed reaction is a fatty acyl-[ACP] + phosphate = an acyl phosphate + holo-[ACP]. It participates in lipid metabolism; phospholipid metabolism. In terms of biological role, catalyzes the reversible formation of acyl-phosphate (acyl-PO(4)) from acyl-[acyl-carrier-protein] (acyl-ACP). This enzyme utilizes acyl-ACP as fatty acyl donor, but not acyl-CoA. This is Phosphate acyltransferase from Caldanaerobacter subterraneus subsp. tengcongensis (strain DSM 15242 / JCM 11007 / NBRC 100824 / MB4) (Thermoanaerobacter tengcongensis).